The sequence spans 257 residues: Adenylate kinase (257 aa).

52-57 is an ATP binding site; it reads GAGKGT. An NMP region spans residues 72-101; that stretch reads ATGDMLRSQVAKKTELGKEAKKIMDQGGLV. AMP contacts are provided by residues Thr-73, Arg-78, 99 to 101, 128 to 131, and Gln-135; these read GLV and GFPR. Positions 169–206 are LID; that stretch reads GRLVHPASGRSYHKIFNPPKNDMKDDVTGEPLIQRSDD. ATP-binding positions include Arg-170 and 179 to 180; that span reads SY. Residues Arg-203 and Arg-214 each contribute to the AMP site. Residue Gln-242 coordinates ATP.

The protein belongs to the adenylate kinase family. AK2 subfamily. Monomer.

Its subcellular location is the cytoplasm. It is found in the cytosol. The protein localises to the mitochondrion intermembrane space. The catalysed reaction is AMP + ATP = 2 ADP. Its function is as follows. Catalyzes the reversible transfer of the terminal phosphate group between ATP and AMP. Plays an important role in cellular energy homeostasis and in adenine nucleotide metabolism. Adenylate kinase activity is critical for regulation of the phosphate utilization and the AMP de novo biosynthesis pathways. The polypeptide is Adenylate kinase (adk1) (Aspergillus fumigatus (strain CBS 144.89 / FGSC A1163 / CEA10) (Neosartorya fumigata)).